The following is a 574-amino-acid chain: Type II methyltransferase M.PaeR7I (574 aa).

Belongs to the N(4)/N(6)-methyltransferase family. Monomer.

It catalyses the reaction a 2'-deoxyadenosine in DNA + S-adenosyl-L-methionine = an N(6)-methyl-2'-deoxyadenosine in DNA + S-adenosyl-L-homocysteine + H(+). Functionally, a gamma subtype methylase, recognizes the double-stranded sequence 5'-CTCGAG-3', methylates A-5 on both strands, and protects the DNA from cleavage by the PaeR7I endonuclease. The sequence is that of Type II methyltransferase M.PaeR7I (paeR7IM) from Pseudomonas aeruginosa.